The primary structure comprises 505 residues: ATP synthase subunit alpha, chloroplastic (505 aa).

170-177 (GDRQTGKT) contributes to the ATP binding site.

The protein belongs to the ATPase alpha/beta chains family. As to quaternary structure, F-type ATPases have 2 components, CF(1) - the catalytic core - and CF(0) - the membrane proton channel. CF(1) has five subunits: alpha(3), beta(3), gamma(1), delta(1), epsilon(1). CF(0) has four main subunits: a, b, b' and c.

The protein resides in the plastid. It is found in the chloroplast thylakoid membrane. The catalysed reaction is ATP + H2O + 4 H(+)(in) = ADP + phosphate + 5 H(+)(out). Functionally, produces ATP from ADP in the presence of a proton gradient across the membrane. The alpha chain is a regulatory subunit. The polypeptide is ATP synthase subunit alpha, chloroplastic (Oenothera elata subsp. hookeri (Hooker's evening primrose)).